A 418-amino-acid polypeptide reads, in one-letter code: uncharacterized protein (418 aa).

A compositionally biased stretch (basic and acidic residues) spans 282-297 (EEHSSIAKLDSEEKIR). The disordered stretch occupies residues 282-346 (EEHSSIAKLD…SASVDDVSEE (65 aa)). Low complexity predominate over residues 304–316 (SSTSLSPDPTSDN). Residues 322–337 (WVSSQDTSKNSSNLAS) are compositionally biased toward polar residues.

This is an uncharacterized protein from Schizosaccharomyces pombe (strain 972 / ATCC 24843) (Fission yeast).